The following is a 270-amino-acid chain: Small ribosomal subunit protein eS1 (270 aa).

Disordered stretches follow at residues 1 to 20 (MAVGKNKGTSKGGKKGSKKK) and 238 to 270 (GGGKGAEVSTGAAEGGVVVDRPEGYEPPVQESV).

Belongs to the eukaryotic ribosomal protein eS1 family. As to quaternary structure, component of the small ribosomal subunit. Mature ribosomes consist of a small (40S) and a large (60S) subunit. The 40S subunit contains about 33 different proteins and 1 molecule of RNA (18S). The 60S subunit contains about 49 different proteins and 3 molecules of RNA (28S, 5.8S and 5S).

It is found in the cytoplasm. The sequence is that of Small ribosomal subunit protein eS1 from Culex quinquefasciatus (Southern house mosquito).